The chain runs to 79 residues: Acyl carrier protein (79 aa).

In terms of domain architecture, Carrier spans 2 to 77 (DNIEQRVKKI…QAIDYARANV (76 aa)). Ser37 is modified (O-(pantetheine 4'-phosphoryl)serine).

It belongs to the acyl carrier protein (ACP) family. In terms of processing, 4'-phosphopantetheine is transferred from CoA to a specific serine of apo-ACP by AcpS. This modification is essential for activity because fatty acids are bound in thioester linkage to the sulfhydryl of the prosthetic group.

It localises to the cytoplasm. It functions in the pathway lipid metabolism; fatty acid biosynthesis. Functionally, carrier of the growing fatty acid chain in fatty acid biosynthesis. In Burkholderia cenocepacia (strain HI2424), this protein is Acyl carrier protein.